A 552-amino-acid polypeptide reads, in one-letter code: E3 ubiquitin-protein ligase MGRN1 (552 aa).

The N-myristoyl glycine moiety is linked to residue Gly-2. Residues 278–317 (CVVCLSDLRDTLILPCRHLCLCTSCADTLRYQANNCPICR) form an RING-type zinc finger. The tract at residues 355 to 384 (SCPFKKSKPHPASLASKKPKRETNSDSVPP) is disordered. The Required for TSG101-binding signature appears at 406–409 (PSAP). The residue at position 411 (Tyr-411) is a Phosphotyrosine. A disordered region spans residues 439 to 552 (SSRQKGRPQS…PDSCSVGIDE (114 aa)). The span at 450–460 (APDSTLRSPSS) shows a compositional bias: polar residues. Residues 464–475 (EEDEEKLSEDVD) are compositionally biased toward acidic residues. Position 471 is a phosphoserine (Ser-471). Over residues 504–523 (SSSPQQGTRAASIENVLQDS) the composition is skewed to polar residues. Position 524 is a phosphoserine (Ser-524).

As to quaternary structure, interacts with MC1R and MC4R, but not with TBXA2R. Interacts with TSG101. Interacts with mislocalized cytosolically exposed PRNP; this interaction alters MGRN1 subcellular location and causes lysosomal enlargement. In terms of processing, autoubiquitinated in vitro.

Its subcellular location is the early endosome. The protein resides in the cytoplasm. It localises to the cytosol. The protein localises to the nucleus. It is found in the cell membrane. The catalysed reaction is S-ubiquitinyl-[E2 ubiquitin-conjugating enzyme]-L-cysteine + [acceptor protein]-L-lysine = [E2 ubiquitin-conjugating enzyme]-L-cysteine + N(6)-ubiquitinyl-[acceptor protein]-L-lysine.. It participates in protein modification; protein ubiquitination. Its function is as follows. E3 ubiquitin-protein ligase. Mediates monoubiquitination at multiple sites of TSG101 in the presence of UBE2D1, but not of UBE2G1, nor UBE2H. Plays a role in the regulation of endosome-to-lysosome trafficking. Impairs MC1R- and MC4R-signaling by competing with GNAS-binding to MCRs and inhibiting agonist-induced cAMP production. Does not inhibit ADRB2-signaling. Does not promote MC1R ubiquitination. Acts also as a negative regulator of hedgehog signaling. The protein is E3 ubiquitin-protein ligase MGRN1 (MGRN1) of Homo sapiens (Human).